The following is a 705-amino-acid chain: MFPQEEKLIRERLGREPNDVERAMLEVMWSEHVSYKSSRKWLKLLPTKNEHVVLGPGEDAGIIKFDDKTWIVIGIESHNHPSAVEPYGGAATGVGGIVRDILCMGARPIALLDPIRFGPLEKEKNRYLFEYVVKGISDYGNRIGVPTVGGETEFDESLDNYTLVNVACVGIMKPEHLVHSYVTEPGLKLIIVGNRTGRDGIHGVTFASEELSENAEEEDRSAVQIPDPFTEKLLIEATLEAVYTGKVRALKDLGGGGLTCAASEMVGKRGFGAIIYADKVLLREPGMTPLEVMISESQERMLFAVRPEDVEELARIFEKYELEWSVVGEVIEEPKFIVYWKGSKVAELPIDLLTEVPTIEWPMKEYKIEEEVGIPRISLQEAFEKVWRSPNIVAKRWIWEQYDHEVQGRTVVKPGFDSAVLKINEEYGIAITADGNPNHCYLNPYHGAMGLVAEVVRNLVSVGAKPLALVDNLNFASPERPEVYWSFAETVKGLADAAKAFNLAYVSGNVSFYNEIVDKPIKPTPVVAGVGKVKLSKIPKGPNKGDVVTLVGETKRELGGSELYRVLGIRKGIAPRVNLEVERKNAESILRLINASLVSFVHDLSRGGLLVALAEVAALFNVGMEVTIKTDMNPVEFAFSESHGRYLVVLPERKLEEAREITDLKVIGRIIGSNSFSVKINDEVLLWNLDKLKDVYWNTLYRLMD.

The active site involves His32. Tyr35 provides a ligand contact to ATP. Glu76 is a binding site for Mg(2+). Residues 77–80 (SHNH) and Arg99 each bind substrate. Catalysis depends on His78, which acts as the Proton acceptor. Asp100 is a Mg(2+) binding site. Substrate is bound at residue Gln224. Mg(2+) is bound at residue Asp252. 296–298 (ESQ) lines the substrate pocket. ATP contacts are provided by Asp471 and Gly508. Asn509 serves as a coordination point for Mg(2+). Substrate is bound at residue Ser511.

This sequence belongs to the FGAMS family. In terms of assembly, monomer. Part of the FGAM synthase complex composed of 1 PurL, 1 PurQ and 2 PurS subunits.

The protein localises to the cytoplasm. The enzyme catalyses N(2)-formyl-N(1)-(5-phospho-beta-D-ribosyl)glycinamide + L-glutamine + ATP + H2O = 2-formamido-N(1)-(5-O-phospho-beta-D-ribosyl)acetamidine + L-glutamate + ADP + phosphate + H(+). Its pathway is purine metabolism; IMP biosynthesis via de novo pathway; 5-amino-1-(5-phospho-D-ribosyl)imidazole from N(2)-formyl-N(1)-(5-phospho-D-ribosyl)glycinamide: step 1/2. Functionally, part of the phosphoribosylformylglycinamidine synthase complex involved in the purines biosynthetic pathway. Catalyzes the ATP-dependent conversion of formylglycinamide ribonucleotide (FGAR) and glutamine to yield formylglycinamidine ribonucleotide (FGAM) and glutamate. The FGAM synthase complex is composed of three subunits. PurQ produces an ammonia molecule by converting glutamine to glutamate. PurL transfers the ammonia molecule to FGAR to form FGAM in an ATP-dependent manner. PurS interacts with PurQ and PurL and is thought to assist in the transfer of the ammonia molecule from PurQ to PurL. This is Phosphoribosylformylglycinamidine synthase subunit PurL from Pyrococcus horikoshii (strain ATCC 700860 / DSM 12428 / JCM 9974 / NBRC 100139 / OT-3).